The chain runs to 3008 residues: Genome polyprotein (3008 aa).

At S2 the chain carries N-acetylserine; by host. Residues 2 to 23 (STNPKPQRKTKRNTNRRPMDVK) form an interaction with STAT1 region. The segment at 2–58 (STNPKPQRKTKRNTNRRPMDVKFPGGGQIVGGVYLLPRRGPRLGVRATRKTSERSQP) is interaction with EIF2AK2/PKR. Positions 2-59 (STNPKPQRKTKRNTNRRPMDVKFPGGGQIVGGVYLLPRRGPRLGVRATRKTSERSQPR) are interaction with DDX3X. The disordered stretch occupies residues 2 to 75 (STNPKPQRKT…PKARRPEGRS (74 aa)). Residues 2–168 (STNPKPQRKT…EDGINYATGN (167 aa)) are Cytoplasmic-facing. 2 short sequence motifs (nuclear localization signal) span residues 5 to 13 (PKPQRKTKR) and 38 to 43 (PRRGPR). Over residues 7 to 16 (PQRKTKRNTN) the composition is skewed to basic residues. The segment covering 32 to 47 (GGVYLLPRRGPRLGVR) has biased composition (low complexity). S53 carries the phosphoserine; by host modification. 2 consecutive short sequence motifs (nuclear localization signal) follow at residues 58–64 (PRGRRQP) and 66–71 (PKARRP). Positions 58-68 (PRGRRQPIPKA) are enriched in basic residues. Phosphoserine; by host occurs at positions 99 and 116. The segment at 112–152 (PRGRSRNLGKVIDTLTCGFADLMGYIPLVGAPVGSVARALA) is important for endoplasmic reticulum and mitochondrial localization. The interaction with APOA2 stretch occupies residues 122-173 (VIDTLTCGFADLMGYIPLVGAPVGSVARALAHGVRALEDGINYATGNLPGCS). The segment at 164-167 (YATG) is important for lipid droplets localization. A helical membrane pass occupies residues 169–189 (LPGCSFSIFLLALLSCLTVPA). A propeptide spans 178–191 (LLALLSCLTVPASA) (ER anchor for the core protein, removed in mature form by host signal peptidase). The Lumenal portion of the chain corresponds to 190–358 (SAVNYRNVSG…SGGHWGVLVG (169 aa)). Residues N196, N209, and N234 are each glycosylated (N-linked (GlcNAc...) asparagine; by host). The segment at 265 to 296 (MVGAATVCSGLYIGDLCGGLFLVGQMFSFRPR) is important for fusion. N-linked (GlcNAc...) asparagine; by host glycosylation occurs at N305. The chain crosses the membrane as a helical span at residues 359–379 (VAYFSMQANWAKVILVLFLFA). At 380 to 725 (GVDAETHVSG…WEYVVLAFLL (346 aa)) the chain is on the lumenal side. The segment at 385 to 412 (THVSGAAVGRSTAGLANLFSSGSKQNLQ) is HVR1. N-linked (GlcNAc...) (high mannose) asparagine; by host glycosylation is found at N417, N423, and N430. Cystine bridges form between C429–C553, C452–C459, C487–C495, and C504–C509. N448 carries N-linked (GlcNAc...) asparagine; by host glycosylation. Residues 475–479 (ANISG) are HVR2. Residue N476 is glycosylated (N-linked (GlcNAc...) asparagine; by host). The interval 481–494 (SDDRPYCWHYAPRP) is CD81-binding 1. N-linked (GlcNAc...) asparagine; by host glycosylation occurs at N533. The CD81-binding 2 stretch occupies residues 545–552 (PPHGAWFG). An N-linked (GlcNAc...) asparagine; by host glycan is attached at N557. 4 disulfides stabilise this stretch: C565/C570, C581/C585, C597/C620, and C607/C644. N-linked (GlcNAc...) (high mannose) asparagine; by host glycosylation is found at N623 and N645. C652 and C677 are joined by a disulfide. The interval 660–671 (VELSPLLLTTTA) is PKR/eIF2-alpha phosphorylation homology domain (PePHD). A helical membrane pass occupies residues 726–746 (LADARVSAYLWMMFMVSQVEA). Over 747–757 (ALSNLININAA) the chain is Lumenal. A helical membrane pass occupies residues 758 to 778 (SAAGAQGFWYAILFICIVWHV). The Cytoplasmic segment spans residues 779–782 (KGRF). A helical transmembrane segment spans residues 783 to 803 (PAAAAYAACGLWPCFLLLLML). At 804–813 (PERAYAYDQE) the chain is on the lumenal side. A helical membrane pass occupies residues 814-834 (VAGSLGGAIVVMLTILTLSPH). Residues 835–881 (YKLWLARGLWWIQYFIARTEAVLHVYIPSFNVRGPRDSVIVLAVLVC) lie on the Cytoplasmic side of the membrane. Residues 882-902 (PDLVFDITKYLLAILGPLHIL) form a helical membrane-spanning segment. The Lumenal portion of the chain corresponds to 903 to 928 (QASLLRIPYFVRAQALVKICSLLRGV). The region spanning 903–1026 (QASLLRIPYF…TETSKGWRLL (124 aa)) is the Peptidase C18 domain. The protease NS2-3 stretch occupies residues 904 to 1206 (ASLLRIPYFV…PVESLETTMR (303 aa)). A lipid anchor (S-palmitoyl cysteine; by host) is attached at C922. Residues 929–949 (VYGKYFQMVVLKSRGLTGTYI) form a helical membrane-spanning segment. The interval 929 to 949 (VYGKYFQMVVLKSRGLTGTYI) is interaction with host SCPS1. The Cytoplasmic portion of the chain corresponds to 950-1657 (YDHLTPMSDW…CMSADLEVVT (708 aa)). Residues H952, E972, and C993 each act as for protease NS2 activity; shared with dimeric partner in the active site. The Peptidase S29 domain occupies 1027-1208 (APITAYAQQT…ESLETTMRSP (182 aa)). Active-site charge relay system; for serine protease NS3 activity residues include H1083 and D1107. Zn(2+)-binding residues include C1123 and C1125. S1165 acts as the Charge relay system; for serine protease NS3 activity in catalysis. Positions 1171 and 1175 each coordinate Zn(2+). Positions 1217 to 1369 (PAVPQTYQVA…SNIEEVALPT (153 aa)) constitute a Helicase ATP-binding domain. 1230–1237 (APTGSGKS) contributes to the ATP binding site. Mg(2+) is bound by residues S1237 and E1317. Positions 1316–1319 (DECY) match the DECH box motif. Positions 1486–1498 (QRRGRTGRGRLGT) are RNA-binding. Residues 1658-1678 (STWVLVGGVLAALAAYCLSVG) traverse the membrane as a helical segment. Residues 1679–1690 (SVVIVGRVVLSG) form an NS3-binding region. Topologically, residues 1679-1805 (SVVIVGRVVL…AVTSPLTTQQ (127 aa)) are cytoplasmic. A helical transmembrane segment spans residues 1806–1826 (TLLFNILGGWVASQIRDSDAS). Over 1827–1828 (TA) the chain is Lumenal. A helical transmembrane segment spans residues 1829–1849 (FVVSGLAGAAVGSVGLGKILV). Position 1850 (D1850) is a topological domain, cytoplasmic. A helical transmembrane segment spans residues 1851–1871 (ILPGYGAGVRGAVVTFKIMSG). Residues 1872 to 1881 (EMPSTEDLVN) are Lumenal-facing. The helical transmembrane segment at 1882-1902 (LLPAILSPGALVVEVVCPAIL) threads the bilayer. At 1903–1972 (RRHVGPGEGA…WINEDCSTPC (70 aa)) the chain is on the cytoplasmic side. C1972 carries S-palmitoyl cysteine; by host lipidation. The stretch at 1973-2002 (AESWLWEVWDWVLHVLSDFKTCLKAKFVPL) is an intramembrane region. Residues 2003–2987 (MPGIPLLSWP…YHSMSHARPR (985 aa)) are Cytoplasmic-facing. Zn(2+) is bound by residues C2029, C2031, and C2052. The segment at 2120 to 2208 (ELFTEVDGIR…ASSSASQLSP (89 aa)) is FKBP8-binding. The segment at 2120-2329 (ELFTEVDGIR…PVPSPRRKRT (210 aa)) is transcriptional activation. The segment at 2135–2139 (PKCKP) is interaction with non-structural protein 4A. The segment at 2189–2435 (RLARGSRPSL…ALVTPCAAEE (247 aa)) is interaction with host SKP2. 5 positions are modified to phosphoserine; by host: S2194, S2197, S2201, S2204, and S2207. The interval 2210–2245 (LLQATCTAPHDSPGTDLLEANLLWGSTATRVETDEK) is ISDR. Positions 2210-2272 (LLQATCTAPH…REVSVAAEIL (63 aa)) are interaction with EIF2AK2/PKR. Residues 2245–2303 (KVIILDSFESCVAEQNDDREVSVAAEILRPTKKFPPALPIWARPDYNPPLTETWKQQDY) are NS4B-binding. The interval 2296–2373 (ETWKQQDYQA…TPTETTDSGP (78 aa)) is V3. An SH3-binding motif is present at residues 2319 to 2322 (PPVP). Residues 2324-2332 (PRRKRTVQL) carry the Nuclear localization signal motif. A disordered region spans residues 2346 to 2406 (AKTFGQSEPS…DPDLTSDSWS (61 aa)). A Glycyl lysine isopeptide (Lys-Gly) (interchain with G-Cter in ubiquitin) cross-link involves residue K2347. The residue at position 2446 (S2446) is a Phosphoserine; by host. The 119-residue stretch at 2631–2749 (PMGFSYDTRC…IAESDGVEED (119 aa)) folds into the RdRp catalytic domain. Mg(2+) contacts are provided by D2637, D2735, and D2736. The helical transmembrane segment at 2988-3008 (YLLLCLLILTVGVGIFLLPAR) threads the bilayer.

It belongs to the hepacivirus polyprotein family. As to quaternary structure, homooligomer. Interacts with E1 (via C-terminus). Interacts with the non-structural protein 5A. Interacts (via N-terminus) with host STAT1 (via SH2 domain); this interaction results in decreased STAT1 phosphorylation and ubiquitin-mediated proteasome-dependent STAT1 degradation, leading to decreased IFN-stimulated gene transcription. Interacts with host STAT3; this interaction constitutively activates STAT3. Interacts with host LTBR receptor. Interacts with host TNFRSF1A receptor and possibly induces apoptosis. Interacts with host HNRPK. Interacts with host YWHAE. Interacts with host UBE3A/E6AP. Interacts with host DDX3X. Interacts with host APOA2. Interacts with host RXRA protein. Interacts with host SP110 isoform 3/Sp110b; this interaction sequesters the transcriptional corepressor SP110 away from the nucleus. Interacts with host CREB3 nuclear transcription protein; this interaction triggers cell transformation. Interacts with host ACY3. Interacts with host C1QR1. Interacts with host RBM24; this interaction, which enhances the interaction of the mature core protein with 5'-UTR, may inhibit viral translation and favor replication. Interacts with host EIF2AK2/PKR; this interaction induces the autophosphorylation of EIF2AK2. Part of the viral assembly initiation complex composed of NS2, E1, E2, NS3, NS4A, NS5A and the mature core protein. In terms of assembly, forms a heterodimer with envelope glycoprotein E2. Interacts with mature core protein. Interacts with protease NS2. The heterodimer E1/E2 interacts with host CLDN1; this interaction plays a role in viral entry into host cell. Interacts with host SPSB2 (via C-terminus). Part of the viral assembly initiation complex composed of NS2, E1, E2, NS3, NS4A, NS5A and the mature core protein. Interacts with host NEURL3; this interaction prevents E1 binding to glycoprotein E2. Forms a heterodimer with envelope glycoprotein E1. Interacts with host CD81 and SCARB1 receptors; these interactions play a role in viral entry into host cell. Interacts with host EIF2AK2/PKR; this interaction inhibits EIF2AK2 and probably allows the virus to evade the innate immune response. Interacts with host CD209/DC-SIGN and CLEC4M/DC-SIGNR. Interact with host SPCS1; this interaction is essential for viral particle assembly. Interacts with protease NS2. The heterodimer E1/E2 interacts with host CLDN1; this interaction plays a role in viral entry into host cell. Part of the viral assembly initiation complex composed of NS2, E1, E2, NS3, NS4A, NS5A and the mature core protein. Interacts with host SLC3A2/4F2hc; the interaction may facilitate viral entry into host cell. Interacts with human PLSCR1. As to quaternary structure, homohexamer. Homoheptamer. Interacts with protease NS2. In terms of assembly, homodimer. Interacts with host SPCS1; this interaction is essential for viral particle assembly. Interacts with envelope glycoprotein E1. Interacts with envelope glycoprotein E2. Interacts with viroporin p7. Interacts with serine protease/helicase NS3. Part of the replication complex composed of NS2, NS3, NS4A, NS4B, NS5A and the RNA-directed RNA polymerase embedded in an ER-derived membranous web. Part of the viral assembly initiation complex composed of NS2, E1, E2, NS3, NS4A, NS5A and the mature core protein. Interacts with protease NS2. Interacts with non-structural protein 4A; this interaction stabilizes the folding of NS3 serine protease. NS3-NS4A interaction is essential for NS3 activation and allows membrane anchorage of the latter. NS3/NS4A complex also prevents phosphorylation of host IRF3, thus preventing the establishment of dsRNA induced antiviral state. Interacts with host MAVS; this interaction leads to the cleavage and inhibition of host MAVS. Interacts with host TICAM1; this interaction leads to the cleavage and inhibition of host TICAM1. Interacts with host TANK-binding kinase/TBK1; this interaction results in the inhibition of the association between TBK1 and IRF3, which leads to the inhibition of IRF3 activation. Interacts with host RBM24. Part of the replication complex composed of NS2, NS3, NS4A, NS4B, NS5A and the RNA-directed RNA polymerase embedded in an ER-derived membranous web. Part of the viral assembly initiation complex composed of NS2, E1, E2, NS3, NS4A, NS5A and the mature core protein. As to quaternary structure, interacts with NS3 serine protease; this interaction stabilizes the folding of NS3 serine protease. NS3-NS4A interaction is essential for NS3 activation and allows membrane anchorage of the latter. Interacts with non-structural protein 5A (via N-terminus). Part of the replication complex composed of NS2, NS3, NS4A, NS4B, NS5A and the RNA-directed RNA polymerase embedded in an ER-derived membranous web. Part of the viral assembly initiation complex composed of NS2, E1, E2, NS3, NS4A, NS5A and the mature core protein. In terms of assembly, homomultimer. Interacts with non-structural protein NS5A. Interacts with host PLA2G4C; this interaction likely initiates the recruitment of replication complexes to lipid droplets. Interacts with host STING; this interaction disrupts the interaction between STING and TBK1 thereby suppressing the interferon signaling. Part of the replication complex composed of NS2, NS3, NS4A, NS4B, NS5A and the RNA-directed RNA polymerase embedded in an ER-derived membranous web. Monomer. Homodimer; dimerization is required for RNA-binding. Interacts with the mature core protein. Interacts (via N-terminus) with non-structural protein 4A. Interacts with non-structural protein 4B. Interacts (via region D2) with RNA-directed RNA polymerase. Part of the viral assembly initiation complex composed of NS2, E1, E2, NS3, NS4A, NS5A and the mature core protein. Part of the replication complex composed of NS2, NS3, NS4A, NS4B, NS5A and the RNA-directed RNA polymerase embedded in an ER-derived membranous web. Interacts with host GRB2. Interacts with host BIN1. Interacts with host PIK3R1. Interacts with host SRCAP. Interacts with host FKBP8. Interacts (via C-terminus) with host VAPB (via MSP domain). Interacts with host EIF2AK2/PKR; this interaction leads to disruption of EIF2AK2 dimerization by NS5A and probably allows the virus to evade the innate immune response. Interacts (via N-terminus) with host PACSIN2 (via N-terminus); this interaction attenuates protein kinase C alpha-mediated phosphorylation of PACSIN2 by disrupting the interaction between PACSIN2 and PRKCA. Interacts (via N-terminus) with host SRC kinase (via SH2 domain). Interacts with most Src-family kinases. Interacts with host IFI27 and SKP2; promotes the ubiquitin-mediated proteasomal degradation of NS5A. Interacts with host GPS2. Interacts with host TNFRSF21; this interaction allows the modulation by the virus of JNK, p38 MAPK, STAT3, and Akt signaling pathways in a DR6-dependent manner. Interacts (via N-terminus) with host CIDEB (via N-terminus); this interaction seems to regulate the association of HCV particles with APOE. Interacts with host CHKA/Choline Kinase-alpha; CHKA bridges host PI4KA and NS5A and potentiates NS5A-stimulated PI4KA activity, which then facilitates the targeting of the ternary complex to the ER for viral replication. Interacts with host SPSB2 (via C-terminus); this interaction targets NS5A for ubiquitination and degradation. Interacts with host RAB18; this interaction may promote the association of NS5A and other replicase components with lipid droplets. Interacts (via region D2) with host PPIA/CYPA; the interaction stimulates RNA-binding ability of NS5A and is dependent on the peptidyl-prolyl cis-trans isomerase activity of PPIA/CYPA. Interacts with host TRIM14; this interaction induces the degradation of NS5A. As to quaternary structure, homooligomer. Interacts with non-structural protein 5A. Interacts with host VAPB. Interacts with host PRK2/PKN2. Interacts with host HNRNPA1 and SEPT6; these interactions facilitate viral replication. Part of the replication complex composed of NS2, NS3, NS4A, NS4B, NS5A and the RNA-directed RNA polymerase. Zn(2+) is required as a cofactor. Requires Mg(2+) as cofactor. In terms of processing, specific enzymatic cleavages in vivo yield mature proteins. The structural proteins, core, E1, E2 and p7 are produced by proteolytic processing by host signal peptidases. The core protein precursor is synthesized as a 23 kDa, which is retained in the ER membrane through the hydrophobic signal peptide. Cleavage by the signal peptidase releases the 21 kDa mature core protein. The cleavage of the core protein precursor occurs between aminoacids 176 and 188 but the exact cleavage site is not known. Some degraded forms of the core protein appear as well during the course of infection. The other proteins (p7, NS2, NS3, NS4A, NS4B, NS5A and NS5B) are cleaved by the viral proteases. Autoprocessing between NS2 and NS3 is mediated by the NS2 cysteine protease catalytic domain and regulated by the NS3 N-terminal domain. Post-translationally, phosphorylated by host PKC and PKA. Ubiquitinated; mediated by UBE3A and leading to core protein subsequent proteasomal degradation. In terms of processing, highly N-glycosylated. Post-translationally, palmitoylation is required for NS2/3 autoprocessing and E2 recruitment to membranes. Palmitoylated. This modification may play a role in its polymerization or in protein-protein interactions. In terms of processing, phosphorylated on serines in a basal form termed p56. p58 is a hyperphosphorylated form of p56. p56 and p58 coexist in the cell in roughly equivalent amounts. Hyperphosphorylation is dependent on the presence of NS4A. Host CSNK1A1/CKI-alpha or RPS6KB1 kinases may be responsible for NS5A phosphorylation. Post-translationally, tyrosine phosphorylation is essential for the interaction with host SRC. The N-terminus is phosphorylated by host PRK2/PKN2.

Its subcellular location is the host endoplasmic reticulum membrane. It localises to the host mitochondrion membrane. The protein localises to the virion. It is found in the host cytoplasm. The protein resides in the host nucleus. Its subcellular location is the host lipid droplet. It localises to the virion membrane. The protein localises to the host mitochondrion. It is found in the host cell membrane. The protein resides in the host perinuclear region. The enzyme catalyses Hydrolysis of four peptide bonds in the viral precursor polyprotein, commonly with Asp or Glu in the P6 position, Cys or Thr in P1 and Ser or Ala in P1'.. The catalysed reaction is a ribonucleoside 5'-triphosphate + H2O = a ribonucleoside 5'-diphosphate + phosphate + H(+). It carries out the reaction ATP + H2O = ADP + phosphate + H(+). It catalyses the reaction RNA(n) + a ribonucleoside 5'-triphosphate = RNA(n+1) + diphosphate. Inhibited by the antiviral drug hexamethylene amiloride. Inhibition by amantadine appears to be genotype-dependent. Also inhibited by long-alkyl-chain iminosugar derivatives. Its activity is regulated as follows. Activity is up-regulated by PRK2/PKN2-mediated phosphorylation. Its function is as follows. Packages viral RNA to form a viral nucleocapsid, and promotes virion budding. Participates in the viral particle production as a result of its interaction with the non-structural protein 5A. Binds RNA and may function as a RNA chaperone to induce the RNA structural rearrangements taking place during virus replication. Modulates viral translation initiation by interacting with viral IRES and 40S ribosomal subunit. Affects various cell signaling pathways, host immunity and lipid metabolism. Prevents the establishment of cellular antiviral state by blocking the interferon-alpha/beta (IFN-alpha/beta) and IFN-gamma signaling pathways and by blocking the formation of phosphorylated STAT1 and promoting ubiquitin-mediated proteasome-dependent degradation of STAT1. Activates STAT3 leading to cellular transformation. Regulates the activity of cellular genes, including c-myc and c-fos. May repress the promoter of p53, and sequester CREB3 and SP110 isoform 3/Sp110b in the cytoplasm. Represses cell cycle negative regulating factor CDKN1A, thereby interrupting an important check point of normal cell cycle regulation. Targets transcription factors involved in the regulation of inflammatory responses and in the immune response: suppresses TNF-induced NF-kappa-B activation, and activates AP-1. Binds to dendritic cells (DCs) via C1QR1, resulting in down-regulation of T-lymphocytes proliferation. Alters lipid metabolism by interacting with hepatocellular proteins involved in lipid accumulation and storage. Induces up-regulation of FAS promoter activity, and thereby contributes to the increased triglyceride accumulation in hepatocytes (steatosis). In terms of biological role, forms a heterodimer with envelope glycoprotein E2, which mediates virus attachment to the host cell, virion internalization through clathrin-dependent endocytosis and fusion with host membrane. Fusion with the host cell is most likely mediated by both E1 and E2, through conformational rearrangements of the heterodimer required for fusion rather than a classical class II fusion mechanism. E1/E2 heterodimer binds host apolipoproteins such as APOB and ApoE thereby forming a lipo-viro-particle (LVP). APOE associated to the LVP allows the initial virus attachment to cell surface receptors such as the heparan sulfate proteoglycans (HSPGs), syndecan-1 (SDC1), syndecan-1 (SDC2), the low-density lipoprotein receptor (LDLR) and scavenger receptor class B type I (SCARB1). The cholesterol transfer activity of SCARB1 allows E2 exposure and binding of E2 to SCARB1 and the tetraspanin CD81. E1/E2 heterodimer binding on CD81 activates the epithelial growth factor receptor (EGFR) signaling pathway. Diffusion of the complex E1-E2-EGFR-SCARB1-CD81 to the cell lateral membrane allows further interaction with Claudin 1 (CLDN1) and occludin (OCLN) to finally trigger HCV entry. Functionally, forms a heterodimer with envelope glycoprotein E1, which mediates virus attachment to the host cell, virion internalization through clathrin-dependent endocytosis and fusion with host membrane. Fusion with the host cell is most likely mediated by both E1 and E2, through conformational rearrangements of the heterodimer required for fusion rather than a classical class II fusion mechanism. The interaction between envelope glycoprotein E2 and host apolipoprotein E/APOE allows the proper assembly, maturation and infectivity of the viral particles. This interaction is probably promoted via the up-regulation of cellular autophagy by the virus. E1/E2 heterodimer binds host apolipoproteins such as APOB and APOE thereby forming a lipo-viro-particle (LVP). APOE associated to the LVP allows the initial virus attachment to cell surface receptors such as the heparan sulfate proteoglycans (HSPGs), syndecan-1 (SDC1), syndecan-1 (SDC2), the low-density lipoprotein receptor (LDLR) and scavenger receptor class B type I (SCARB1). The cholesterol transfer activity of SCARB1 allows E2 exposure and binding of E2 to SCARB1 and the tetraspanin CD81. E1/E2 heterodimer binding on CD81 activates the epithelial growth factor receptor (EGFR) signaling pathway. Diffusion of the complex E1-E2-EGFR-SCARB1-CD81 to the cell lateral membrane allows further interaction with Claudin 1 (CLDN1) and occludin (OCLN) to finally trigger HCV entry. Inhibits host EIF2AK2/PKR activation, preventing the establishment of an antiviral state. Viral ligand for CD209/DC-SIGN and CLEC4M/DC-SIGNR, which are respectively found on dendritic cells (DCs), and on liver sinusoidal endothelial cells and macrophage-like cells of lymph node sinuses. These interactions allow the capture of circulating HCV particles by these cells and subsequent facilitated transmission to permissive cells such as hepatocytes and lymphocyte subpopulations. The interaction between E2 and host amino acid transporter complex formed by SLC3A2 and SLC7A5/LAT1 may facilitate viral entry into host cell. Ion channel protein that acts as a viroporin and plays an essential role in the assembly, envelopment and secretion of viral particles. Regulates the host cell secretory pathway, which induces the intracellular retention of viral glycoproteins and favors assembly of viral particles. Creates a pore in acidic organelles and releases Ca(2+) and H(+) in the cytoplasm of infected cells, leading to a productive viral infection. High levels of cytoplasmic Ca(2+) may trigger membrane trafficking and transport of viral ER-associated proteins to viroplasms, sites of viral genome replication. This ionic imbalance induces the assembly of the inflammasome complex, which triggers the maturation of pro-IL-1beta into IL-1beta through the action of caspase-1. Targets also host mitochondria and induces mitochondrial depolarization. In addition of its role as a viroporin, acts as a lipid raft adhesion factor. Its function is as follows. Cysteine protease required for the proteolytic auto-cleavage between the non-structural proteins NS2 and NS3. The N-terminus of NS3 is required for the function of NS2 protease (active region NS2-3). Promotes the initiation of viral particle assembly by mediating the interaction between structural and non-structural proteins. In terms of biological role, displays three enzymatic activities: serine protease with a chymotrypsin-like fold, NTPase and RNA helicase. NS3 serine protease, in association with NS4A, is responsible for the cleavages of NS3-NS4A, NS4A-NS4B, NS4B-NS5A and NS5A-NS5B. The NS3/NS4A complex prevents phosphorylation of host IRF3, thus preventing the establishment of dsRNA induced antiviral state. The NS3/NS4A complex induces host amino acid transporter component SLC3A2, thus contributing to HCV propagation. NS3 RNA helicase binds to RNA and unwinds both dsDNA and dsRNA in the 3' to 5' direction, and likely resolves RNA complicated stable secondary structures in the template strand. Binds a single ATP and catalyzes the unzipping of a single base pair of dsRNA. Inhibits host antiviral proteins TBK1 and IRF3 thereby preventing the establishment of an antiviral state. Cleaves host MAVS/CARDIF thereby preventing the establishment of an antiviral state. Cleaves host TICAM1/TRIF, thereby disrupting TLR3 signaling and preventing the establishment of an antiviral state. Functionally, induces a specific membrane alteration that serves as a scaffold for the virus replication complex. This membrane alteration gives rise to the so-called ER-derived membranous web that contains the replication complex. NS4B self-interaction contributes to its function in membranous web formation. Promotes host TRIF protein degradation in a CASP8-dependent manner thereby inhibiting host TLR3-mediated interferon signaling. Disrupts the interaction between STING and TBK1 contributing to the inhibition of interferon signaling. Phosphorylated protein that is indispensable for viral replication and assembly. Both hypo- and hyperphosphorylated states are required for the viral life cycle. The hyperphosphorylated form of NS5A is an inhibitor of viral replication. Involved in RNA-binding and especially in binding to the viral genome. Zinc is essential for RNA-binding. Participates in the viral particle production as a result of its interaction with the mature viral core protein. Its interaction with host VAPB may target the viral replication complex to vesicles. Down-regulates viral IRES translation initiation. Mediates interferon resistance, presumably by interacting with and inhibiting host EIF2AK2/PKR. Prevents BIN1-induced apoptosis. Acts as a transcriptional activator of some host genes important for viral replication when localized in the nucleus. Via the interaction with host PACSIN2, modulates lipid droplet formation in order to promote virion assembly. Modulates TNFRSF21/DR6 signaling pathway for viral propagation. Its function is as follows. RNA-dependent RNA polymerase that performs primer-template recognition and RNA synthesis during viral replication. Initiates RNA transcription/replication at a flavin adenine dinucleotide (FAD), resulting in a 5'- FAD cap on viral RNAs. In this way, recognition of viral 5' RNA by host pattern recognition receptors can be bypassed, thereby evading activation of antiviral pathways. This Homo sapiens (Human) protein is Genome polyprotein.